The chain runs to 185 residues: Transposon Tn3 resolvase (185 aa).

In terms of domain architecture, Resolvase/invertase-type recombinase catalytic spans 2 to 137 (RIFGYARVST…EGRQEAKLKG (136 aa)). Serine 10 functions as the O-(5'-phospho-DNA)-serine intermediate in the catalytic mechanism. Residues 161 to 180 (ATEIAHQLSIARSTVYKILE) constitute a DNA-binding region (H-T-H motif).

The protein belongs to the site-specific recombinase resolvase family.

Resolvase catalyzes the resolution (a site-specific recombination) of the cointegrated replicon to yield the final transposition products. This chain is Transposon Tn3 resolvase (tnpR), found in Escherichia coli.